A 447-amino-acid chain; its full sequence is Phosphoglucosamine mutase (447 aa).

Catalysis depends on Ser-100, which acts as the Phosphoserine intermediate. Mg(2+) is bound by residues Ser-100, Asp-239, Asp-241, and Asp-243. Phosphoserine is present on Ser-100.

It belongs to the phosphohexose mutase family. The cofactor is Mg(2+). In terms of processing, activated by phosphorylation.

The enzyme catalyses alpha-D-glucosamine 1-phosphate = D-glucosamine 6-phosphate. In terms of biological role, catalyzes the conversion of glucosamine-6-phosphate to glucosamine-1-phosphate. This chain is Phosphoglucosamine mutase, found in Caldanaerobacter subterraneus subsp. tengcongensis (strain DSM 15242 / JCM 11007 / NBRC 100824 / MB4) (Thermoanaerobacter tengcongensis).